Consider the following 519-residue polypeptide: Ribonuclease Y (519 aa).

A helical membrane pass occupies residues 3–23 (LMIFAYIAIGAVLGAGTGYLL). The region spanning 209-272 (TVTAVTLPSE…QVAKMALERL (64 aa)) is the KH domain. The HD domain maps to 335-428 (VLQHSLEVSA…VQAADSISGA (94 aa)).

Belongs to the RNase Y family.

Its subcellular location is the cell membrane. Its function is as follows. Endoribonuclease that initiates mRNA decay. This Nitratidesulfovibrio vulgaris (strain ATCC 29579 / DSM 644 / CCUG 34227 / NCIMB 8303 / VKM B-1760 / Hildenborough) (Desulfovibrio vulgaris) protein is Ribonuclease Y.